Here is a 771-residue protein sequence, read N- to C-terminus: U-box domain-containing protein 6 (771 aa).

Positions 274–348 constitute a U-box domain; sequence IPPEELRCPI…ASWCEQNGIT (75 aa). The disordered stretch occupies residues 394-415; that stretch reads EESSTIESERQQKEKNNAPDEV. The segment covering 400 to 411 has biased composition (basic and acidic residues); sequence ESERQQKEKNNA. ARM repeat units lie at residues 456 to 499, 502 to 542, 544 to 581, 583 to 622, and 625 to 664; these read EEAR…NLAV, NRNK…CLEK, KPVI…NLST, SPNI…NLAS, and EGKE…ILCT. A compositionally biased stretch (basic and acidic residues) spans 706–722; that stretch reads EQRHRDQPSPNKEEAPR. The interval 706 to 751 is disordered; it reads EQRHRDQPSPNKEEAPRKTVSAPMAIPAPVSAPESEVKPLTKSISR.

It catalyses the reaction S-ubiquitinyl-[E2 ubiquitin-conjugating enzyme]-L-cysteine + [acceptor protein]-L-lysine = [E2 ubiquitin-conjugating enzyme]-L-cysteine + N(6)-ubiquitinyl-[acceptor protein]-L-lysine.. It participates in protein modification; protein ubiquitination. Its function is as follows. Functions as an E3 ubiquitin ligase. This chain is U-box domain-containing protein 6 (PUB6), found in Arabidopsis thaliana (Mouse-ear cress).